The chain runs to 335 residues: S-adenosylmethionine:tRNA ribosyltransferase-isomerase (335 aa).

The protein belongs to the QueA family. Monomer.

It localises to the cytoplasm. It carries out the reaction 7-aminomethyl-7-carbaguanosine(34) in tRNA + S-adenosyl-L-methionine = epoxyqueuosine(34) in tRNA + adenine + L-methionine + 2 H(+). It functions in the pathway tRNA modification; tRNA-queuosine biosynthesis. Transfers and isomerizes the ribose moiety from AdoMet to the 7-aminomethyl group of 7-deazaguanine (preQ1-tRNA) to give epoxyqueuosine (oQ-tRNA). This chain is S-adenosylmethionine:tRNA ribosyltransferase-isomerase, found in Thermotoga petrophila (strain ATCC BAA-488 / DSM 13995 / JCM 10881 / RKU-1).